The sequence spans 556 residues: Butanoate--CoA ligase AAE1 (556 aa).

Positions 554-556 match the Microbody targeting signal motif; sequence SKL.

The protein belongs to the ATP-dependent AMP-binding enzyme family. As to expression, expressed in roots, leaves, stems, flowers and developing seeds.

The protein localises to the peroxisome. The enzyme catalyses butanoate + ATP + CoA = butanoyl-CoA + AMP + diphosphate. It carries out the reaction hexanoate + ATP + CoA = hexanoyl-CoA + AMP + diphosphate. It catalyses the reaction pentanoate + ATP + CoA = pentanoyl-CoA + AMP + diphosphate. The catalysed reaction is 4-methylpentanoate + ATP + CoA = 4-methylpentanoyl-CoA + AMP + diphosphate. Catalyzes the ligation of CoA on butanoate to produce butanoyl-CoA. Can also use hexanoate, pentanoate and 4-methylpentanoate as substrates with a lower efficiency. The chain is Butanoate--CoA ligase AAE1 from Arabidopsis thaliana (Mouse-ear cress).